A 428-amino-acid polypeptide reads, in one-letter code: Flotillin-2 (428 aa).

Residue Gly-2 is the site of N-myristoyl glycine attachment. Residue Cys-4 is the site of S-palmitoyl cysteine; by ZDHHC5 attachment. Residue Cys-19 is the site of S-palmitoyl cysteine attachment. A lipid anchor (S-palmitoyl cysteine; by ZDHHC5) is attached at Cys-20. Ser-405 bears the Phosphoserine mark.

The protein belongs to the band 7/mec-2 family. Flotillin subfamily. As to quaternary structure, heterooligomeric complex of flotillin-1 and flotillin-2 and caveolin-1 and caveolin-2. Interacts with ECPAS. Post-translationally, ZDHHC5-catalyzed palmitoylation may be required for the formation of higher-order complexes and for neurite outgrowth in cultured neural stem cells. Expressed in many tissues, including suprabasal epidermis, hair follicles, heart, lung, thymus, spleen, liver, kidney and brain. Not expressed in skeletal muscle.

The protein resides in the cell membrane. It is found in the membrane. The protein localises to the caveola. It localises to the endosome. Its function is as follows. May act as a scaffolding protein within caveolar membranes, functionally participating in formation of caveolae or caveolae-like vesicles. May be involved in epidermal cell adhesion and epidermal structure and function. The polypeptide is Flotillin-2 (Flot2) (Mus musculus (Mouse)).